The following is a 492-amino-acid chain: Adenosylhomocysteinase-like 2 (492 aa).

The segment at 43 to 64 (FTGSSDEEDVSPKDNHQRNSAG) is disordered. Positions 192 and 217 each coordinate substrate. Residue 218–220 (SVT) coordinates NAD(+). Substrate-binding residues include K247 and D251. NAD(+) contacts are provided by residues 283 to 288 (GDVGKG), E304, 360 to 362 (MGH), N407, K486, 486 to 490 (KANYY), and Y490.

The protein belongs to the adenosylhomocysteinase family. The cofactor is NAD(+).

Its function is as follows. Might play a role in the regulation of methionine metabolism. The polypeptide is Adenosylhomocysteinase-like 2 (Drosophila melanogaster (Fruit fly)).